Reading from the N-terminus, the 196-residue chain is GTP cyclohydrolase 1 (196 aa).

Residues C85, H88, and C158 each coordinate Zn(2+).

Belongs to the GTP cyclohydrolase I family. As to quaternary structure, homomer.

It carries out the reaction GTP + H2O = 7,8-dihydroneopterin 3'-triphosphate + formate + H(+). The protein operates within cofactor biosynthesis; 7,8-dihydroneopterin triphosphate biosynthesis; 7,8-dihydroneopterin triphosphate from GTP: step 1/1. This chain is GTP cyclohydrolase 1, found in Corynebacterium aurimucosum (strain ATCC 700975 / DSM 44827 / CIP 107346 / CN-1) (Corynebacterium nigricans).